The following is a 258-amino-acid chain: 5-oxoprolinase subunit A (258 aa).

This sequence belongs to the LamB/PxpA family. Forms a complex composed of PxpA, PxpB and PxpC.

It carries out the reaction 5-oxo-L-proline + ATP + 2 H2O = L-glutamate + ADP + phosphate + H(+). Functionally, catalyzes the cleavage of 5-oxoproline to form L-glutamate coupled to the hydrolysis of ATP to ADP and inorganic phosphate. This chain is 5-oxoprolinase subunit A, found in Deinococcus radiodurans (strain ATCC 13939 / DSM 20539 / JCM 16871 / CCUG 27074 / LMG 4051 / NBRC 15346 / NCIMB 9279 / VKM B-1422 / R1).